Reading from the N-terminus, the 210-residue chain is Protein MSO1 (210 aa).

Met-1 is modified (N-acetylmethionine). Residue Met-2 is modified to N-acetylserine. Residues 88-210 (KHDMKKQNSR…LKRRNNDYGF (123 aa)) are disordered. Ser-102 carries the phosphoserine modification. Positions 117–141 (TPSSNGNTPEYTPASKSFQDIYNNH) are enriched in polar residues. Composition is skewed to low complexity over residues 142–161 (TSSS…RPSA) and 172–183 (SKTSNSFNTSST).

Interacts physically with SEC1.

Functionally, involved in secretion. Component of the secretory vesicle docking complex. This chain is Protein MSO1 (MSO1), found in Saccharomyces cerevisiae (strain ATCC 204508 / S288c) (Baker's yeast).